The sequence spans 845 residues: Disintegrin and metalloproteinase domain-containing protein 9 (845 aa).

The first 29 residues, 1–29 (MGPRALSPLASLRLRWLLACGLLGPVLEA), serve as a signal peptide directing secretion. The Extracellular segment spans residues 30 to 697 (GRPDLEQTVH…YNAKSTALRD (668 aa)). N-linked (GlcNAc...) asparagine glycans are attached at residues asparagine 144, asparagine 154, and asparagine 231. The 195-residue stretch at 212–406 (RYVELFIVVD…KGGSCLLNIP (195 aa)) folds into the Peptidase M12B domain. Disulfide bonds link cysteine 322–cysteine 401, cysteine 363–cysteine 385, cysteine 365–cysteine 370, and cysteine 473–cysteine 493. Histidine 347 is a Zn(2+) binding site. Residue glutamate 348 is part of the active site. The Zn(2+) site is built by histidine 351 and histidine 357. Asparagine 381, asparagine 487, and asparagine 636 each carry an N-linked (GlcNAc...) asparagine glycan. A Disintegrin domain is found at 414 to 501 (APSCGNKLVD…FCPPDVFIQN (88 aa)). Disulfide bonds link cysteine 644–cysteine 656, cysteine 650–cysteine 662, and cysteine 664–cysteine 673. Residues 644–698 (CDIQGKCHGHGVCNSNKNCHCEDGWAPPHCDTKGYGGSVDSGPTYNAKSTALRDG) form the EGF-like domain. The chain crosses the membrane as a helical span at residues 698-718 (GLLVFFFLIVPLVAAAIFLFI). The Cytoplasmic segment spans residues 719–845 (KRDELRKTFR…PAPPLYSSLT (127 aa)). Residues 729–845 (KKRSQMSDGR…PAPPLYSSLT (117 aa)) are disordered. Positions 734 to 745 (MSDGRNQANVSR) are enriched in polar residues. Positions 783–794 (PGGPGVSRPPPG) are enriched in pro residues.

In terms of assembly, interacts with SH3GL2 and SNX9 through its cytoplasmic tail. Interacts with ITGA6. Zn(2+) is required as a cofactor. Post-translationally, proteolytically cleaved in the trans-Golgi network before it reaches the plasma membrane to generate a mature protein. The removal of the pro-domain occurs via cleavage at two different sites. Processed most likely by a pro-protein convertase such as furin, at the boundary between the pro-domain and the catalytic domain. An additional upstream cleavage pro-protein convertase site (Arg-56/Glu-57) has an important role in the activation of ADAM9. Phosphorylation is induced in vitro by phorbol-12-myristate-13-acetate (PMA).

It is found in the cell membrane. With respect to regulation, synthesized as an inactive form which is proteolytically cleaved to generate an active enzyme. Processing at the upstream site is particularly important for activation of the proenzyme, whereas processing at the boundary between the pro-domain and the catalytic domain does not appear to be essential. Inhibited by hydroxamic acid-based inhibitors. In terms of biological role, metalloprotease that cleaves and releases a number of molecules with important roles in tumorigenesis and angiogenesis, such as TEK, KDR, EPHB4, CD40, VCAM1 and CDH5. May mediate cell-cell, cell-matrix interactions and regulate the motility of cells via interactions with integrins. This is Disintegrin and metalloproteinase domain-containing protein 9 from Mus musculus (Mouse).